The chain runs to 121 residues: Ribosome-binding factor A (121 aa).

Belongs to the RbfA family. Monomer. Binds 30S ribosomal subunits, but not 50S ribosomal subunits or 70S ribosomes.

The protein localises to the cytoplasm. In terms of biological role, one of several proteins that assist in the late maturation steps of the functional core of the 30S ribosomal subunit. Associates with free 30S ribosomal subunits (but not with 30S subunits that are part of 70S ribosomes or polysomes). Required for efficient processing of 16S rRNA. May interact with the 5'-terminal helix region of 16S rRNA. The chain is Ribosome-binding factor A from Clostridium kluyveri (strain NBRC 12016).